Consider the following 152-residue polypeptide: Transcriptional regulator MraZ (152 aa).

2 consecutive SpoVT-AbrB domains span residues 5 to 52 (ATMV…PLPE) and 81 to 124 (ASEC…DEQT).

Belongs to the MraZ family. Forms oligomers.

The protein localises to the cytoplasm. Its subcellular location is the nucleoid. In terms of biological role, negatively regulates its own expression and that of the subsequent genes in the proximal part of the division and cell wall (dcw) gene cluster. Acts by binding directly to DNA. May also regulate the expression of genes outside the dcw cluster. In Yersinia pseudotuberculosis serotype O:1b (strain IP 31758), this protein is Transcriptional regulator MraZ.